Consider the following 537-residue polypeptide: MFKREEIIEMANKDFEKAWIETKGLIKSKRVNESYPRIKPIFGKTHPVNDTIENLRQAYLRMGFEEYINPVIVDERDIYKQFGPEAMAVLDRCFYLAGLPRPDVGLSDEKISQIEKLGINVSCHKESLQKILHGYKKGTLDGDDLVLEISKALEISSEMGLKILEEVFPEFKDLIAVSSKLTLRSHMTSGWFITLSELNGKKPLPFKLFSIDRCFRREQKEDKSHLMTYHSASCVIAGKDVDINDGKAVAEGLLSQFGFTNFKFIPDEKKSKYYTPETQTEVYAYHPKLKEWLEVATFGVYSPVALSKYGIDVPVMNLGLGVERLSMISGNFEDVREMVYPQFYEQSLSDRAISSMVKFDKVPVLDEIYDLTKELIDLCVKNKDITSPCNLKLEKTFIFGKTKKNVKIIVFEKEENKKLLGPSILNEIYVYDGNIIGIPETFEGVKEEFKEFLEKGKVEGVTTGIRYIDALCFKITSKVEEAFVSNTSEFKLKVPIVRSLSDINLKIEEIALKQIMSKNKVIDVRGPVFLNVEVKIE.

Substrate-binding positions include 186–188 (HMT), 231–233 (SAS), 273–274 (YY), and N317.

This sequence belongs to the class-II aminoacyl-tRNA synthetase family. O-phosphoseryl-tRNA(Cys) synthetase subfamily. Homotetramer. Interacts with SepCysS.

The enzyme catalyses tRNA(Cys) + O-phospho-L-serine + ATP = O-phospho-L-seryl-tRNA(Cys) + AMP + diphosphate. In terms of biological role, catalyzes the attachment of O-phosphoserine (Sep) to tRNA(Cys). The polypeptide is O-phosphoserine--tRNA(Cys) ligase (Methanococcus vannielii (strain ATCC 35089 / DSM 1224 / JCM 13029 / OCM 148 / SB)).